A 226-amino-acid chain; its full sequence is tRNA (guanine-N(7)-)-methyltransferase (226 aa).

Positions 1–21 (MTHPQQPHGPLRSFGRLKSRP) are disordered. S-adenosyl-L-methionine contacts are provided by glutamate 59, glutamate 84, aspartate 111, and aspartate 133. Residue aspartate 133 is part of the active site. Lysine 137 provides a ligand contact to substrate. Residues 139–144 (RHNKRR) form an interaction with RNA region. Substrate contacts are provided by residues aspartate 169 and 206-209 (TRYE).

The protein belongs to the class I-like SAM-binding methyltransferase superfamily. TrmB family.

The catalysed reaction is guanosine(46) in tRNA + S-adenosyl-L-methionine = N(7)-methylguanosine(46) in tRNA + S-adenosyl-L-homocysteine. It functions in the pathway tRNA modification; N(7)-methylguanine-tRNA biosynthesis. In terms of biological role, catalyzes the formation of N(7)-methylguanine at position 46 (m7G46) in tRNA. In Caulobacter sp. (strain K31), this protein is tRNA (guanine-N(7)-)-methyltransferase.